Reading from the N-terminus, the 168-residue chain is Crossover junction endodeoxyribonuclease RuvC (168 aa).

Catalysis depends on residues aspartate 9, glutamate 69, and aspartate 141. Mg(2+) contacts are provided by aspartate 9, glutamate 69, and aspartate 141.

Belongs to the RuvC family. In terms of assembly, homodimer which binds Holliday junction (HJ) DNA. The HJ becomes 2-fold symmetrical on binding to RuvC with unstacked arms; it has a different conformation from HJ DNA in complex with RuvA. In the full resolvosome a probable DNA-RuvA(4)-RuvB(12)-RuvC(2) complex forms which resolves the HJ. Mg(2+) is required as a cofactor.

It is found in the cytoplasm. The catalysed reaction is Endonucleolytic cleavage at a junction such as a reciprocal single-stranded crossover between two homologous DNA duplexes (Holliday junction).. Functionally, the RuvA-RuvB-RuvC complex processes Holliday junction (HJ) DNA during genetic recombination and DNA repair. Endonuclease that resolves HJ intermediates. Cleaves cruciform DNA by making single-stranded nicks across the HJ at symmetrical positions within the homologous arms, yielding a 5'-phosphate and a 3'-hydroxyl group; requires a central core of homology in the junction. The consensus cleavage sequence is 5'-(A/T)TT(C/G)-3'. Cleavage occurs on the 3'-side of the TT dinucleotide at the point of strand exchange. HJ branch migration catalyzed by RuvA-RuvB allows RuvC to scan DNA until it finds its consensus sequence, where it cleaves and resolves the cruciform DNA. The protein is Crossover junction endodeoxyribonuclease RuvC of Bdellovibrio bacteriovorus (strain ATCC 15356 / DSM 50701 / NCIMB 9529 / HD100).